We begin with the raw amino-acid sequence, 401 residues long: Argininosuccinate synthase (401 aa).

ATP is bound at residue 9–17; the sequence is AYSGGLDTS. An L-citrulline-binding site is contributed by Tyr-86. Gly-116 contributes to the ATP binding site. Positions 118, 122, and 123 each coordinate L-aspartate. An L-citrulline-binding site is contributed by Asn-122. L-citrulline contacts are provided by Arg-126, Ser-174, Ser-183, Glu-259, and Tyr-271.

It belongs to the argininosuccinate synthase family. Type 1 subfamily. Homotetramer.

It localises to the cytoplasm. It carries out the reaction L-citrulline + L-aspartate + ATP = 2-(N(omega)-L-arginino)succinate + AMP + diphosphate + H(+). The protein operates within amino-acid biosynthesis; L-arginine biosynthesis; L-arginine from L-ornithine and carbamoyl phosphate: step 2/3. This chain is Argininosuccinate synthase, found in Bacillus cytotoxicus (strain DSM 22905 / CIP 110041 / 391-98 / NVH 391-98).